The primary structure comprises 307 residues: Aspartate carbamoyltransferase catalytic subunit (307 aa).

Carbamoyl phosphate is bound by residues Arg58 and Thr59. Lys86 is an L-aspartate binding site. Carbamoyl phosphate contacts are provided by Arg108, His136, and Gln139. The L-aspartate site is built by Arg169 and Arg223. Residues Gly264 and Pro265 each contribute to the carbamoyl phosphate site.

Belongs to the aspartate/ornithine carbamoyltransferase superfamily. ATCase family. Heterododecamer (2C3:3R2) of six catalytic PyrB chains organized as two trimers (C3), and six regulatory PyrI chains organized as three dimers (R2).

The catalysed reaction is carbamoyl phosphate + L-aspartate = N-carbamoyl-L-aspartate + phosphate + H(+). The protein operates within pyrimidine metabolism; UMP biosynthesis via de novo pathway; (S)-dihydroorotate from bicarbonate: step 2/3. Functionally, catalyzes the condensation of carbamoyl phosphate and aspartate to form carbamoyl aspartate and inorganic phosphate, the committed step in the de novo pyrimidine nucleotide biosynthesis pathway. The protein is Aspartate carbamoyltransferase catalytic subunit of Moorella thermoacetica (strain ATCC 39073 / JCM 9320).